Here is a 156-residue protein sequence, read N- to C-terminus: Endoribonuclease YbeY (156 aa).

Residues His-119, His-123, and His-129 each coordinate Zn(2+).

It belongs to the endoribonuclease YbeY family. Zn(2+) serves as cofactor.

The protein resides in the cytoplasm. In terms of biological role, single strand-specific metallo-endoribonuclease involved in late-stage 70S ribosome quality control and in maturation of the 3' terminus of the 16S rRNA. The protein is Endoribonuclease YbeY of Buchnera aphidicola subsp. Cinara cedri (strain Cc).